Here is an 88-residue protein sequence, read N- to C-terminus: Translation initiation factor IF-1 3 (88 aa).

Residues 1–72 (MAKEELLELD…TKGCINFRHK (72 aa)) form the S1-like domain.

The protein belongs to the IF-1 family. Component of the 30S ribosomal translation pre-initiation complex which assembles on the 30S ribosome in the order IF-2 and IF-3, IF-1 and N-formylmethionyl-tRNA(fMet); mRNA recruitment can occur at any time during PIC assembly.

The protein localises to the cytoplasm. In terms of biological role, one of the essential components for the initiation of protein synthesis. Stabilizes the binding of IF-2 and IF-3 on the 30S subunit to which N-formylmethionyl-tRNA(fMet) subsequently binds. Helps modulate mRNA selection, yielding the 30S pre-initiation complex (PIC). Upon addition of the 50S ribosomal subunit IF-1, IF-2 and IF-3 are released leaving the mature 70S translation initiation complex. This chain is Translation initiation factor IF-1 3, found in Burkholderia orbicola (strain AU 1054).